The chain runs to 421 residues: Gamma-glutamyl phosphate reductase (421 aa).

The protein belongs to the gamma-glutamyl phosphate reductase family.

Its subcellular location is the cytoplasm. It catalyses the reaction L-glutamate 5-semialdehyde + phosphate + NADP(+) = L-glutamyl 5-phosphate + NADPH + H(+). It participates in amino-acid biosynthesis; L-proline biosynthesis; L-glutamate 5-semialdehyde from L-glutamate: step 2/2. Catalyzes the NADPH-dependent reduction of L-glutamate 5-phosphate into L-glutamate 5-semialdehyde and phosphate. The product spontaneously undergoes cyclization to form 1-pyrroline-5-carboxylate. In Brucella melitensis biotype 1 (strain ATCC 23456 / CCUG 17765 / NCTC 10094 / 16M), this protein is Gamma-glutamyl phosphate reductase.